Consider the following 122-residue polypeptide: Large ribosomal subunit protein uL14 (122 aa).

It belongs to the universal ribosomal protein uL14 family. Part of the 50S ribosomal subunit. Forms a cluster with proteins L3 and L19. In the 70S ribosome, L14 and L19 interact and together make contacts with the 16S rRNA in bridges B5 and B8.

Functionally, binds to 23S rRNA. Forms part of two intersubunit bridges in the 70S ribosome. This Citrifermentans bemidjiense (strain ATCC BAA-1014 / DSM 16622 / JCM 12645 / Bem) (Geobacter bemidjiensis) protein is Large ribosomal subunit protein uL14.